The primary structure comprises 266 residues: 15-hydroxyprostaglandin dehydrogenase [NAD(+)] (266 aa).

NAD(+)-binding positions include 12-20, 36-37, 63-65, and asparagine 91; these read GAAQGIGRA, DW, and CDV. The substrate site is built by serine 138 and glutamine 148. Catalysis depends on tyrosine 151, which acts as the Proton acceptor. NAD(+)-binding positions include 151 to 155 and 186 to 188; these read YCASK and VNT.

The protein belongs to the short-chain dehydrogenases/reductases (SDR) family. Homodimer. Detected in colon epithelium (at protein level).

The protein localises to the cytoplasm. It catalyses the reaction prostaglandin E2 + NAD(+) = 15-oxoprostaglandin E2 + NADH + H(+). The enzyme catalyses (15S)-hydroxy-(5Z,8Z,11Z,13E)-eicosatetraenoate + NAD(+) = 15-oxo-(5Z,8Z,11Z,13E)-eicosatetraenoate + NADH + H(+). The catalysed reaction is (11R)-hydroxy-(5Z,8Z,12E,14Z)-eicosatetraenoate + NAD(+) = 11-oxo-(5Z,8Z,12E,14Z)-eicosatetraenoate + NADH + H(+). It carries out the reaction lipoxin A4 + NAD(+) = 15-oxo-(5S,6R)-dihydroxy-(7E,9E,11Z,13E)-eicosatetraenoate + NADH + H(+). It catalyses the reaction 15-oxo-(5S,6R)-dihydroxy-(7E,9E,11Z)-eicosatrienoate + NADH + H(+) = (5S,6R,15S)-trihydroxy-(7E,9E,11Z)-eicosatrienoate + NAD(+). The enzyme catalyses prostaglandin A1 + NAD(+) = 15-oxo-prostaglandin A1 + NADH + H(+). The catalysed reaction is prostaglandin E1 + NAD(+) = 15-oxoprostaglandin E1 + NADH + H(+). It carries out the reaction 14-hydroxy-(4Z,7Z,10Z,12E,16Z,19Z)-docosahexaenoate + NAD(+) = 14-oxo-(4Z,7Z,10Z,12E,16Z,19Z)-docosahexaenoate + NADH + H(+). It catalyses the reaction resolvin E1 + NAD(+) = 18-oxo-resolvin E1 + NADH + H(+). The enzyme catalyses resolvin D1 + NAD(+) = 8-oxoresolvin D1 + NADH + H(+). The catalysed reaction is resolvin D1 + NAD(+) = 17-oxoresolvin D1 + NADH + H(+). It carries out the reaction resolvin D2 + NAD(+) = 7-oxoresolvin D2 + NADH + H(+). It catalyses the reaction resolvin D2 + NAD(+) = 16-oxoresolvin D2 + NADH + H(+). Functionally, catalyzes the NAD-dependent dehydrogenation (oxidation) of a broad array of hydroxylated polyunsaturated fatty acids (mainly eicosanoids and docosanoids, including prostaglandins, lipoxins and resolvins), yielding their corresponding keto (oxo) metabolites. Decreases the levels of the pro-proliferative prostaglandins such as prostaglandin E2 (whose activity is increased in cancer because of an increase in the expression of cyclooxygenase 2) and generates oxo-fatty acid products that can profoundly influence cell function by abrogating pro-inflammatory cytokine expression. Converts resolvins E1, D1 and D2 to their oxo products, which represents a mode of resolvin inactivation. Resolvin E1 plays important roles during the resolution phase of acute inflammation, while resolvins D1 and D2 have a unique role in obesity-induced adipose inflammation. This chain is 15-hydroxyprostaglandin dehydrogenase [NAD(+)], found in Homo sapiens (Human).